We begin with the raw amino-acid sequence, 274 residues long: 3-methyl-2-oxobutanoate hydroxymethyltransferase (274 aa).

The Mg(2+) site is built by Asp49 and Asp88. 3-methyl-2-oxobutanoate-binding positions include Asp49–Ser50, Asp88, and Lys118. Glu120 contributes to the Mg(2+) binding site. Glu187 acts as the Proton acceptor in catalysis.

It belongs to the PanB family. As to quaternary structure, homodecamer; pentamer of dimers. The cofactor is Mg(2+).

Its subcellular location is the cytoplasm. It carries out the reaction 3-methyl-2-oxobutanoate + (6R)-5,10-methylene-5,6,7,8-tetrahydrofolate + H2O = 2-dehydropantoate + (6S)-5,6,7,8-tetrahydrofolate. It participates in cofactor biosynthesis; (R)-pantothenate biosynthesis; (R)-pantoate from 3-methyl-2-oxobutanoate: step 1/2. Functionally, catalyzes the reversible reaction in which hydroxymethyl group from 5,10-methylenetetrahydrofolate is transferred onto alpha-ketoisovalerate to form ketopantoate. The chain is 3-methyl-2-oxobutanoate hydroxymethyltransferase from Nitrobacter winogradskyi (strain ATCC 25391 / DSM 10237 / CIP 104748 / NCIMB 11846 / Nb-255).